A 1128-amino-acid polypeptide reads, in one-letter code: Nck-associated protein 1 (1128 aa).

The interval 640–665 is disordered; it reads AVNKKSKKQTGKKGEPEREKPGVESM. Over residues 651 to 665 the composition is skewed to basic and acidic residues; the sequence is KKGEPEREKPGVESM. A helical membrane pass occupies residues 995 to 1015; it reads IACLLMVFVAVSMPTLASNVM.

It belongs to the HEM-1/HEM-2 family.

It is found in the cell membrane. The protein localises to the cell projection. The protein resides in the lamellipodium membrane. In terms of biological role, part of the WAVE complex that regulates lamellipodia formation. The WAVE complex regulates actin filament reorganization via its interaction with the Arp2/3 complex. Actin remodeling activity is regulated by RAC1. Plays a role in neural tube closure. The chain is Nck-associated protein 1 (nckap1) from Danio rerio (Zebrafish).